The primary structure comprises 292 residues: Protease HtpX (292 aa).

Transmembrane regions (helical) follow at residues 5-25 (IFLF…VMSL) and 34-54 (SGLL…SLLL). Position 140 (His140) interacts with Zn(2+). Residue Glu141 is part of the active site. His144 is a Zn(2+) binding site. 2 consecutive transmembrane segments (helical) span residues 155–175 (LLQG…GGII) and 193–213 (IIVF…AMWF). Glu218 is a binding site for Zn(2+).

Belongs to the peptidase M48B family. Zn(2+) is required as a cofactor.

The protein localises to the cell inner membrane. The chain is Protease HtpX from Xanthomonas euvesicatoria pv. vesicatoria (strain 85-10) (Xanthomonas campestris pv. vesicatoria).